A 317-amino-acid polypeptide reads, in one-letter code: DNA-directed RNA polymerase subunit alpha (317 aa).

The alpha N-terminal domain (alpha-NTD) stretch occupies residues methionine 1–phenylalanine 229. The interval alanine 245–arginine 317 is alpha C-terminal domain (alpha-CTD).

This sequence belongs to the RNA polymerase alpha chain family. In terms of assembly, homodimer. The RNAP catalytic core consists of 2 alpha, 1 beta, 1 beta' and 1 omega subunit. When a sigma factor is associated with the core the holoenzyme is formed, which can initiate transcription.

The enzyme catalyses RNA(n) + a ribonucleoside 5'-triphosphate = RNA(n+1) + diphosphate. In terms of biological role, DNA-dependent RNA polymerase catalyzes the transcription of DNA into RNA using the four ribonucleoside triphosphates as substrates. The polypeptide is DNA-directed RNA polymerase subunit alpha (Aquifex aeolicus (strain VF5)).